Here is a 252-residue protein sequence, read N- to C-terminus: uncharacterized protein (252 aa).

Position 9 to 33 (9 to 33 (LITGGSAGIGLELAKRLLELGNEVI)) interacts with NADP(+). Ser-139 provides a ligand contact to substrate. Tyr-152 (proton acceptor) is an active-site residue.

The protein belongs to the short-chain dehydrogenases/reductases (SDR) family.

The protein localises to the cytoplasm. This is an uncharacterized protein from Bacillus subtilis (strain 168).